Reading from the N-terminus, the 250-residue chain is Probable transcriptional regulatory protein Lferr_0060 (250 aa).

This sequence belongs to the TACO1 family.

It is found in the cytoplasm. The protein is Probable transcriptional regulatory protein Lferr_0060 of Acidithiobacillus ferrooxidans (strain ATCC 53993 / BNL-5-31) (Leptospirillum ferrooxidans (ATCC 53993)).